The following is a 736-amino-acid chain: 1,4-alpha-glucan branching enzyme GlgB (736 aa).

The active-site Nucleophile is the aspartate 415. The active-site Proton donor is the glutamate 470.

The protein belongs to the glycosyl hydrolase 13 family. GlgB subfamily. In terms of assembly, monomer.

The catalysed reaction is Transfers a segment of a (1-&gt;4)-alpha-D-glucan chain to a primary hydroxy group in a similar glucan chain.. The protein operates within glycan biosynthesis; glycogen biosynthesis. Catalyzes the formation of the alpha-1,6-glucosidic linkages in glycogen by scission of a 1,4-alpha-linked oligosaccharide from growing alpha-1,4-glucan chains and the subsequent attachment of the oligosaccharide to the alpha-1,6 position. In Paraburkholderia xenovorans (strain LB400), this protein is 1,4-alpha-glucan branching enzyme GlgB.